We begin with the raw amino-acid sequence, 201 residues long: ADP-ribosylation factor-like protein 4D (201 aa).

Residue G2 is the site of N-myristoyl glycine attachment. Residues 28–35 (GLDSAGKT), 76–80 (DVGGQ), and 135–138 (NKQD) contribute to the GTP site.

This sequence belongs to the small GTPase superfamily. Arf family. As to quaternary structure, interacts with CYTH2; the interaction is direct and ARL4D GTP-dependent. Does not interact with ARL4D.

The protein resides in the nucleus. It localises to the nucleolus. Its subcellular location is the cell membrane. It is found in the cytoplasm. Functionally, small GTP-binding protein which cycles between an inactive GDP-bound and an active GTP-bound form, and the rate of cycling is regulated by guanine nucleotide exchange factors (GEF) and GTPase-activating proteins (GAP). GTP-binding protein that does not act as an allosteric activator of the cholera toxin catalytic subunit. Recruits CYTH1, CYTH2, CYTH3 and CYTH4 to the plasma membrane in GDP-bound form. This is ADP-ribosylation factor-like protein 4D (ARL4D) from Homo sapiens (Human).